The primary structure comprises 259 residues: Imidazole glycerol phosphate synthase subunit HisF (259 aa).

Residues Asp-11 and Asp-130 contribute to the active site.

The protein belongs to the HisA/HisF family. As to quaternary structure, heterodimer of HisH and HisF.

Its subcellular location is the cytoplasm. It carries out the reaction 5-[(5-phospho-1-deoxy-D-ribulos-1-ylimino)methylamino]-1-(5-phospho-beta-D-ribosyl)imidazole-4-carboxamide + L-glutamine = D-erythro-1-(imidazol-4-yl)glycerol 3-phosphate + 5-amino-1-(5-phospho-beta-D-ribosyl)imidazole-4-carboxamide + L-glutamate + H(+). The protein operates within amino-acid biosynthesis; L-histidine biosynthesis; L-histidine from 5-phospho-alpha-D-ribose 1-diphosphate: step 5/9. Its function is as follows. IGPS catalyzes the conversion of PRFAR and glutamine to IGP, AICAR and glutamate. The HisF subunit catalyzes the cyclization activity that produces IGP and AICAR from PRFAR using the ammonia provided by the HisH subunit. This chain is Imidazole glycerol phosphate synthase subunit HisF, found in Polaromonas sp. (strain JS666 / ATCC BAA-500).